Consider the following 352-residue polypeptide: MAKKKKLTQGQVRRVRDNQQKRLKKQADTIQWDEAMLGDSRRGLVITRFGQHADIEDAETGLIERCNLRRGIESLVSGDKVIWRKGLESMAGISGVVEAVEPRTSVLTRPDYYDGLKPVAANIDQMVIVSSVLPELSLNIIDRYLIAAETLGIEPLLVLNKIDLLQEAELATYREWLADYEKIGYKILYVSKRSGAGIAELEAQLQDRINIFVGQSGVGKSSLVNALIPELDIEEGEISELSGLGQHTTTAARLYHIPSGGNLIDSPGVREFGLWHLEPEEITKAYLEFRPYLGGCKFRDCKHADDPGCIIREAVENGEISEVRYDNYHRIIESMAENKANRQYSRNKKADL.

The tract at residues 1 to 24 (MAKKKKLTQGQVRRVRDNQQKRLK) is disordered. A CP-type G domain is found at 104 to 272 (TSVLTRPDYY…LIDSPGVREF (169 aa)). Residues 160 to 163 (NKID) and 214 to 222 (GQSGVGKSS) each bind GTP. The Zn(2+) site is built by Cys-296, Cys-301, His-303, and Cys-309.

This sequence belongs to the TRAFAC class YlqF/YawG GTPase family. RsgA subfamily. As to quaternary structure, monomer. Associates with 30S ribosomal subunit, binds 16S rRNA. Zn(2+) is required as a cofactor.

The protein localises to the cytoplasm. Its function is as follows. One of several proteins that assist in the late maturation steps of the functional core of the 30S ribosomal subunit. Helps release RbfA from mature subunits. May play a role in the assembly of ribosomal proteins into the subunit. Circularly permuted GTPase that catalyzes slow GTP hydrolysis, GTPase activity is stimulated by the 30S ribosomal subunit. This is Small ribosomal subunit biogenesis GTPase RsgA 1 from Vibrio vulnificus (strain CMCP6).